We begin with the raw amino-acid sequence, 533 residues long: Adenosine deaminase (533 aa).

The N-terminal stretch at 1–19 is a signal peptide; the sequence is MKILLAVVFVLNLTNLAVP.

The protein belongs to the metallo-dependent hydrolases superfamily. Adenosine and AMP deaminases family. ADGF subfamily. Requires Zn(2+) as cofactor. In terms of processing, proteolytically cleaved by human mast cell tryptase and chymase. As to expression, female salivary gland (at protein level).

It localises to the secreted. The enzyme catalyses adenosine + H2O + H(+) = inosine + NH4(+). The catalysed reaction is 2'-deoxyadenosine + H2O + H(+) = 2'-deoxyinosine + NH4(+). In terms of biological role, catalyzes the deamination of adenosine to inosine and deoxyadenosine to deoxyinosine. Induces degranulation of host mast cells, and secretion of tryptase and IL6. Modulates enzymatic activities of human tryptase and chymase. Induces release of cytokines, such as IL1B, IL6, TNF, CCL2, IFN-beta (INFB1) and ISG15, from host monocytes and macrophages. Activates host NF-kappa-B signaling pathway in TAK1/MAP3K7-dependent manner. (Microbial infection) Promotes replication of dengue virus type 2 in host cells probably via modulation of cytokine production in host macrophages and monocytes. This Aedes albopictus (Asian tiger mosquito) protein is Adenosine deaminase.